We begin with the raw amino-acid sequence, 108 residues long: DNA-directed RNA polymerase subunit omega (108 aa).

Positions 1–32 (MTNSQSDAALAAVPDRFDPSAGGPGAYDTPLG) are disordered.

The protein belongs to the RNA polymerase subunit omega family. In terms of assembly, the RNAP catalytic core consists of 2 alpha, 1 beta, 1 beta' and 1 omega subunit. When a sigma factor is associated with the core the holoenzyme is formed, which can initiate transcription.

It catalyses the reaction RNA(n) + a ribonucleoside 5'-triphosphate = RNA(n+1) + diphosphate. In terms of biological role, promotes RNA polymerase assembly. Latches the N- and C-terminal regions of the beta' subunit thereby facilitating its interaction with the beta and alpha subunits. The protein is DNA-directed RNA polymerase subunit omega of Mycobacterium avium (strain 104).